A 1032-amino-acid chain; its full sequence is Histone lysine demethylase PHF8 (1032 aa).

The PHD-type zinc-finger motif lies at 5 to 56 (PVYCLCRLPYDVTRFMIECDVCQDWFHGSCVGVEEDKAAEIDLYHCPNCQVT). The linker stretch occupies residues 65 to 83 (RRGAVKHADVGLGRDSGRP). A JmjC domain is found at 199 to 355 (FSDTRLSNLV…MQLRAYEIEK (157 aa)). T248 lines the substrate pocket. Residues H251 and D253 each contribute to the Fe cation site. Residue K268 participates in substrate binding. H323 lines the Fe cation pocket. Disordered regions lie at residues 455 to 515 (SGTP…KGKE), 577 to 660 (QGKK…VDFD), 697 to 857 (LDSA…REGA), 875 to 923 (QQEQ…EPPV), and 943 to 1015 (EYTA…ATAK). Residues 473–483 (QLNTPLTFSQH) show a composition bias toward polar residues. Low complexity predominate over residues 583 to 592 (AGSANGAGSS). Positions 620 to 632 (PRRRPSLPSKKKL) are enriched in basic residues. Basic and acidic residues predominate over residues 644-655 (PCSDPHRIREPG). Composition is skewed to low complexity over residues 699–710 (SALSEEAPASPS) and 724–739 (PPSS…PLSI). A compositionally biased stretch (basic residues) spans 774–784 (PGKRPIKRPAR). Basic and acidic residues predominate over residues 848–857 (KQERPVREGA). Residues 882-891 (ITKRKYTKKK) show a composition bias toward basic residues. A compositionally biased stretch (low complexity) spans 970 to 990 (SRRPSLSPQNSSSYSPSAPSP).

It belongs to the JHDM1 histone demethylase family. JHDM1D subfamily. Fe(2+) is required as a cofactor.

It is found in the nucleus. The protein localises to the nucleolus. It carries out the reaction N(6),N(6)-dimethyl-L-lysyl(36)-[histone H3] + 2 2-oxoglutarate + 2 O2 = L-lysyl(36)-[histone H3] + 2 formaldehyde + 2 succinate + 2 CO2. The enzyme catalyses N(6),N(6)-dimethyl-L-lysyl(9)-[histone H3] + 2 2-oxoglutarate + 2 O2 = L-lysyl(9)-[histone H3] + 2 formaldehyde + 2 succinate + 2 CO2. Its function is as follows. Histone lysine demethylase with selectivity for the di- and monomethyl states that plays a key role cell cycle progression, rDNA transcription and brain development. Demethylates mono- and dimethylated histone H3 'Lys-9' residue (H3K9Me1 and H3K9Me2), dimethylated H3 'Lys-27' (H3K27Me2) and monomethylated histone H4 'Lys-20' residue (H4K20Me1). Acts as a transcription activator as H3K9Me1, H3K9Me2, H3K27Me2 and H4K20Me1 are epigenetic repressive marks. Involved in cell cycle progression by being required to control G1-S transition. Acts as a coactivator of rDNA transcription, by activating polymerase I (pol I) mediated transcription of rRNA genes. Has activity toward H4K20Me1 only when nucleosome is used as a substrate and when not histone octamer is used as substrate. Required for brain development, probably by regulating expression of neuron-specific genes. The chain is Histone lysine demethylase PHF8 (phf8) from Danio rerio (Zebrafish).